Here is an 855-residue protein sequence, read N- to C-terminus: DNA mismatch repair protein MutS (855 aa).

616-623 lines the ATP pocket; it reads GPNMGGKS.

Belongs to the DNA mismatch repair MutS family.

This protein is involved in the repair of mismatches in DNA. It is possible that it carries out the mismatch recognition step. This protein has a weak ATPase activity. The protein is DNA mismatch repair protein MutS of Escherichia coli O139:H28 (strain E24377A / ETEC).